A 351-amino-acid chain; its full sequence is UDP-3-O-acylglucosamine N-acyltransferase (351 aa).

Catalysis depends on histidine 240, which acts as the Proton acceptor.

It belongs to the transferase hexapeptide repeat family. LpxD subfamily. In terms of assembly, homotrimer.

It catalyses the reaction a UDP-3-O-[(3R)-3-hydroxyacyl]-alpha-D-glucosamine + a (3R)-hydroxyacyl-[ACP] = a UDP-2-N,3-O-bis[(3R)-3-hydroxyacyl]-alpha-D-glucosamine + holo-[ACP] + H(+). It participates in bacterial outer membrane biogenesis; LPS lipid A biosynthesis. In terms of biological role, catalyzes the N-acylation of UDP-3-O-acylglucosamine using 3-hydroxyacyl-ACP as the acyl donor. Is involved in the biosynthesis of lipid A, a phosphorylated glycolipid that anchors the lipopolysaccharide to the outer membrane of the cell. This chain is UDP-3-O-acylglucosamine N-acyltransferase, found in Pseudomonas fluorescens (strain Pf0-1).